We begin with the raw amino-acid sequence, 1621 residues long: ABC transporter A family member 2 (1621 aa).

Helical transmembrane passes span 30-50 (ILFP…VMAF), 234-254 (SVFI…DLVI), 276-296 (ISWM…ISII), 309-329 (GVVI…AFIL), 338-358 (FCGL…IFVA), 365-385 (GAKL…IFAM), and 405-425 (NQVI…VWYL). The 234-residue stretch at 484 to 717 (ISIRNLRKEY…FGCGYLLTCS (234 aa)) folds into the ABC transporter 1 domain. Residue 520–527 (GPNGSGKS) coordinates ATP. A run of 7 helical transmembrane segments spans residues 856-876 (FFLT…MYKA), 1033-1053 (IVYF…SFAG), 1083-1103 (VWDY…LAGI), 1111-1131 (FGLM…LSYL), 1142-1162 (ATGA…IISL), 1183-1203 (VDIV…LFLV), and 1227-1247 (GSPM…IMIL). In terms of domain architecture, ABC transporter 2 spans 1293–1528 (LQFRNLHKLF…FGAGYTFDVK (236 aa)). Position 1331 to 1338 (1331 to 1338 (GLNGAGKT)) interacts with ATP.

Belongs to the ABC transporter superfamily. ABCA family.

It localises to the membrane. This is ABC transporter A family member 2 (abcA2) from Dictyostelium discoideum (Social amoeba).